The following is a 96-amino-acid chain: Pyrimidine/purine nucleoside phosphorylase (96 aa).

It belongs to the nucleoside phosphorylase PpnP family.

It catalyses the reaction a purine D-ribonucleoside + phosphate = a purine nucleobase + alpha-D-ribose 1-phosphate. The enzyme catalyses adenosine + phosphate = alpha-D-ribose 1-phosphate + adenine. It carries out the reaction cytidine + phosphate = cytosine + alpha-D-ribose 1-phosphate. The catalysed reaction is guanosine + phosphate = alpha-D-ribose 1-phosphate + guanine. It catalyses the reaction inosine + phosphate = alpha-D-ribose 1-phosphate + hypoxanthine. The enzyme catalyses thymidine + phosphate = 2-deoxy-alpha-D-ribose 1-phosphate + thymine. It carries out the reaction uridine + phosphate = alpha-D-ribose 1-phosphate + uracil. The catalysed reaction is xanthosine + phosphate = alpha-D-ribose 1-phosphate + xanthine. Functionally, catalyzes the phosphorolysis of diverse nucleosides, yielding D-ribose 1-phosphate and the respective free bases. Can use uridine, adenosine, guanosine, cytidine, thymidine, inosine and xanthosine as substrates. Also catalyzes the reverse reactions. This Serratia proteamaculans (strain 568) protein is Pyrimidine/purine nucleoside phosphorylase.